We begin with the raw amino-acid sequence, 154 residues long: Deoxyuridine 5'-triphosphate nucleotidohydrolase (154 aa).

Substrate-binding positions include R68–G70, N81, and T85–D87.

This sequence belongs to the dUTPase family. Requires Mg(2+) as cofactor.

The enzyme catalyses dUTP + H2O = dUMP + diphosphate + H(+). It functions in the pathway pyrimidine metabolism; dUMP biosynthesis; dUMP from dCTP (dUTP route): step 2/2. This enzyme is involved in nucleotide metabolism: it produces dUMP, the immediate precursor of thymidine nucleotides and it decreases the intracellular concentration of dUTP so that uracil cannot be incorporated into DNA. The protein is Deoxyuridine 5'-triphosphate nucleotidohydrolase of Acidiphilium cryptum (strain JF-5).